Here is a 142-residue protein sequence, read N- to C-terminus: DNA-directed RNA polymerase II subunit RPB4 (142 aa).

It belongs to the eukaryotic RPB4 RNA polymerase subunit family. Component of the RNA polymerase II (Pol II) core complex consisting of 12 subunits: a ten-subunit catalytic core composed of POLR2A/RPB1, POLR2B/RPB2, POLR2C/RPB3, POLR2I/RPB9, POLR2J/RPB11, POLR2E/RPABC1, POLR2F/RPABC2, POLR2H/RPABC3, POLR2K/RPABC4 and POLR2L/RPABC5 and a mobile stalk composed of two subunits POLR2D/RPB4 and POLR2G/RPB7, protruding from the core and functioning primarily in transcription initiation. Part of Pol II(G) complex, in which Pol II core associates with an additional subunit POLR2M; unlike conventional Pol II, Pol II(G) functions as a transcriptional repressor. Part of TBP-based Pol II pre-initiation complex (PIC), in which Pol II core assembles with general transcription factors and other specific initiation factors including GTF2E1, GTF2E2, GTF2F1, GTF2F2, TCEA1, ERCC2, ERCC3, GTF2H2, GTF2H3, GTF2H4, GTF2H5, GTF2A1, GTF2A2, GTF2B and TBP; this large multi-subunit PIC complex mediates DNA unwinding and targets Pol II core to the transcription start site where the first phosphodiester bond forms.

It localises to the nucleus. In terms of biological role, core component of RNA polymerase II (Pol II), a DNA-dependent RNA polymerase which synthesizes mRNA precursors and many functional non-coding RNAs using the four ribonucleoside triphosphates as substrates. Pol II is the central component of the basal RNA polymerase II transcription machinery. It is composed of mobile elements that move relative to each other. POLR2D/RPB4 is part of a subcomplex with POLR2G/RPB7 that binds to a pocket formed by POLR2A/RPB1, POLR2B/RPB2 and POLR2F/RPABC2 at the base of the clamp element. The POLR2D/RPB4-POLR2G/RPB7 subcomplex seems to lock the clamp via POLR2G/RPB7 in the closed conformation thus preventing double-stranded DNA to enter the active site cleft. The POLR2D/RPB4-POLR2G/RPB7 subcomplex binds single-stranded DNA and RNA. The chain is DNA-directed RNA polymerase II subunit RPB4 (POLR2D) from Homo sapiens (Human).